The sequence spans 352 residues: Organic solute transporter subunit alpha (352 aa).

Topologically, residues 1-45 (MDVAHPEEVTRFSPDILMEKFNVSEACFLPPPISIQLILQLTWLD) are extracellular. A glycan (N-linked (GlcNAc...) asparagine) is linked at Asn-22. Residues 46–66 (IGVFAALTAMTVLTIAIYLEI) form a helical membrane-spanning segment. Residues 67 to 82 (VCYLMDKVKCPIKRKT) are Cytoplasmic-facing. A helical transmembrane segment spans residues 83–103 (LMWNSAAPTVIAITSCLGLWV). At 104–108 (PRAIM) the chain is on the extracellular side. Residues 109–129 (FVDMAAAMYFGVGFYLMLLII) traverse the membrane as a helical segment. Over 130 to 173 (VQGYGGEEAMLQHLATHTIRISTGPCCCCCPCLPHIHLTRQKYK) the chain is Cytoplasmic. Residues 174 to 194 (IFVLGAFQVAFLRPALFLLGV) traverse the membrane as a helical segment. Topologically, residues 195-210 (VLWTNGLYDPDDWSST) are extracellular. The chain crosses the membrane as a helical span at residues 211-231 (SIFLWLNLFLGVSTILGLWPV). Topologically, residues 232-250 (NVLFRHSKVLMADQKLTCK) are cytoplasmic. Residues 251–271 (FALFQAILILSSLQNSIIGTL) traverse the membrane as a helical segment. Over 272–294 (AGAGHIGCAPPYSARTRGQQMNN) the chain is Extracellular. Residues 295 to 312 (QLLIIEMFFVGILTRISY) form a helical membrane-spanning segment. The Cytoplasmic portion of the chain corresponds to 313–352 (RKRDDRPGHRHVGEVQQIVRECDQPAIADQQADHSSISHI).

Belongs to the OST-alpha family. In terms of assembly, interacts with slc51b. The Ost-alpha/Ost-beta complex is a heterodimer composed of alpha (slc51a) and beta (slc51b) subunit. In terms of tissue distribution, expressed in liver.

It is found in the cell membrane. The protein localises to the endoplasmic reticulum membrane. The catalysed reaction is taurocholate(out) = taurocholate(in). It carries out the reaction prostaglandin E2(out) = prostaglandin E2(in). The enzyme catalyses estrone 3-sulfate(out) = estrone 3-sulfate(in). It catalyses the reaction dehydroepiandrosterone 3-sulfate(out) = dehydroepiandrosterone 3-sulfate(in). The catalysed reaction is tauroursodeoxycholate(out) = tauroursodeoxycholate(in). It carries out the reaction glycoursodeoxycholate(out) = glycoursodeoxycholate(in). The enzyme catalyses glycocholate(out) = glycocholate(in). It catalyses the reaction taurochenodeoxycholate(out) = taurochenodeoxycholate(in). The catalysed reaction is glycochenodeoxycholate(out) = glycochenodeoxycholate(in). It carries out the reaction taurodeoxycholate(out) = taurodeoxycholate(in). The enzyme catalyses glycodeoxycholate(out) = glycodeoxycholate(in). Functionally, essential component of the Ost-alpha/Ost-beta complex, a heterodimer that acts as the intestinal basolateral transporter responsible for the translocation of bile acids (such as taurocholate), steroids (such as estrone sulfate), and eicosanoids (such as prostaglandin E2). This is Organic solute transporter subunit alpha (slc51a) from Leucoraja erinaceus (Little skate).